Reading from the N-terminus, the 333-residue chain is Zinc-type alcohol dehydrogenase-like protein SACOL2177 (333 aa).

The protein belongs to the zinc-containing alcohol dehydrogenase family. Quinone oxidoreductase subfamily.

The sequence is that of Zinc-type alcohol dehydrogenase-like protein SACOL2177 from Staphylococcus aureus (strain COL).